The primary structure comprises 200 residues: Holliday junction resolvase RecU (200 aa).

The Mg(2+) site is built by threonine 85, aspartate 87, glutamate 100, and glutamine 119.

This sequence belongs to the RecU family. It depends on Mg(2+) as a cofactor.

The protein localises to the cytoplasm. It carries out the reaction Endonucleolytic cleavage at a junction such as a reciprocal single-stranded crossover between two homologous DNA duplexes (Holliday junction).. In terms of biological role, endonuclease that resolves Holliday junction intermediates in genetic recombination. Cleaves mobile four-strand junctions by introducing symmetrical nicks in paired strands. Promotes annealing of linear ssDNA with homologous dsDNA. Required for DNA repair, homologous recombination and chromosome segregation. This chain is Holliday junction resolvase RecU, found in Bacillus cytotoxicus (strain DSM 22905 / CIP 110041 / 391-98 / NVH 391-98).